A 359-amino-acid polypeptide reads, in one-letter code: Short chain dehydrogenase resG (359 aa).

NADP(+) is bound by residues lysine 87, aspartate 110, asparagine 137, tyrosine 237, and lysine 241. Tyrosine 237 acts as the Proton donor in catalysis. The active-site Lowers pKa of active site Tyr is lysine 241.

Belongs to the short-chain dehydrogenases/reductases (SDR) family.

Its pathway is antifungal biosynthesis. In terms of biological role, short chain dehydrogenase; part of the gene cluster that mediates the biosynthesis of the tetrahydropyranyl antifungal agent restricticin that acts as an inhibitor of CYP51 and blocks the ergosterol biosynthesis. The highly reducing polyketide synthase resH, the short chain dehydrogenase resG, the cyclase resF, the FAD-dependent monooxygenase resA and the enoylreductase resD are required to generate the first stable intermediate desmethylrestrictinol. ResH with resD biosynthesize the first polyketide chain intermediate that is reduced by resG, followed by epoxidation by resA before 6-endo cyclization via epoxide opening by resF leads to desmethylrestrictinol. The methyltransferase resE then catalyzes the C4 O-methylation of desmethylrestrictinol to produce restrictinol, and the nonribosomal peptide synthetase resC catalyzes the C3 esterification of restrictinol with glycine that leads to restricticin. This chain is Short chain dehydrogenase resG, found in Aspergillus sclerotiorum.